A 404-amino-acid polypeptide reads, in one-letter code: Serine/threonine transporter SstT (404 aa).

The next 9 helical transmembrane spans lie at 12–32 (GGNL…LALV), 53–73 (AIAP…KEVG), 81–101 (ILVM…VLSF), 140–160 (ALAN…GIAL), 177–197 (AVSF…FGLV), 216–236 (LGVL…LIVF), 287–307 (VAIP…VTVL), 329–349 (IVAS…LLLI), and 356–376 (FNIP…IGVI).

The protein belongs to the dicarboxylate/amino acid:cation symporter (DAACS) (TC 2.A.23) family.

It localises to the cell inner membrane. It carries out the reaction L-serine(in) + Na(+)(in) = L-serine(out) + Na(+)(out). It catalyses the reaction L-threonine(in) + Na(+)(in) = L-threonine(out) + Na(+)(out). Its function is as follows. Involved in the import of serine and threonine into the cell, with the concomitant import of sodium (symport system). The polypeptide is Serine/threonine transporter SstT (Actinobacillus pleuropneumoniae serotype 7 (strain AP76)).